Consider the following 314-residue polypeptide: 2,3-dihydroxyphenylpropionate/2,3-dihydroxicinnamic acid 1,2-dioxygenase (314 aa).

The Proton donor role is filled by His115. The active-site Proton acceptor is the His179.

Belongs to the LigB/MhpB extradiol dioxygenase family. In terms of assembly, homotetramer. Fe(2+) is required as a cofactor.

The enzyme catalyses 3-(2,3-dihydroxyphenyl)propanoate + O2 = (2Z,4E)-2-hydroxy-6-oxonona-2,4-dienedioate + H(+). It catalyses the reaction (2E)-3-(2,3-dihydroxyphenyl)prop-2-enoate + O2 = (2Z,4E,7E)-2-hydroxy-6-oxonona-2,4,7-trienedioate + H(+). The protein operates within aromatic compound metabolism; 3-phenylpropanoate degradation. Catalyzes the non-heme iron(II)-dependent oxidative cleavage of 2,3-dihydroxyphenylpropionic acid and 2,3-dihydroxicinnamic acid into 2-hydroxy-6-ketononadienedioate and 2-hydroxy-6-ketononatrienedioate, respectively. The polypeptide is 2,3-dihydroxyphenylpropionate/2,3-dihydroxicinnamic acid 1,2-dioxygenase (Rhodococcus globerulus).